The sequence spans 54 residues: Large ribosomal subunit protein eL37 (54 aa).

The Zn(2+) site is built by cysteine 20, cysteine 23, cysteine 35, and cysteine 38. The segment at 20 to 38 adopts a C4-type zinc-finger fold; that stretch reads CRRCGHHTYNVRTKRCSHC.

It belongs to the eukaryotic ribosomal protein eL37 family. Zn(2+) serves as cofactor.

Its function is as follows. Binds to the 23S rRNA. This is Large ribosomal subunit protein eL37 (rpl37e) from Thermoplasma acidophilum (strain ATCC 25905 / DSM 1728 / JCM 9062 / NBRC 15155 / AMRC-C165).